Here is a 488-residue protein sequence, read N- to C-terminus: Ammonium transporter 1 member 1 (488 aa).

A run of 11 helical transmembrane segments spans residues 47 to 69 (TYLL…LLAG), 90 to 109 (LFYY…NGFI), 129 to 148 (FLYQ…GSIA), 153 to 175 (FVAY…SHWF), 195 to 217 (VIDF…YGAL), 238 to 257 (HSAS…WYGF), 281 to 303 (AVGR…TLFG), 316 to 333 (VCNG…GCSV), 337 to 356 (WAAI…FNML), 368 to 387 (AAQL…GLFA), and 418 to 440 (HIIQ…FYIL).

This sequence belongs to the ammonia transporter channel (TC 1.A.11.2) family. In terms of tissue distribution, root hairs and leaves.

It localises to the membrane. Functionally, ammonium transporter that may be involved in ammonium uptake from the soil. The protein is Ammonium transporter 1 member 1 (AMT1-1) of Solanum lycopersicum (Tomato).